The chain runs to 495 residues: N-succinylglutamate 5-semialdehyde dehydrogenase (495 aa).

220–225 provides a ligand contact to NAD(+); the sequence is GSAGTG. Catalysis depends on residues E243 and C277.

The protein belongs to the aldehyde dehydrogenase family. AstD subfamily.

The catalysed reaction is N-succinyl-L-glutamate 5-semialdehyde + NAD(+) + H2O = N-succinyl-L-glutamate + NADH + 2 H(+). It participates in amino-acid degradation; L-arginine degradation via AST pathway; L-glutamate and succinate from L-arginine: step 4/5. Its function is as follows. Catalyzes the NAD-dependent reduction of succinylglutamate semialdehyde into succinylglutamate. The protein is N-succinylglutamate 5-semialdehyde dehydrogenase of Enterobacter sp. (strain 638).